Consider the following 105-residue polypeptide: Nucleoid-associated protein SE_2306 (105 aa).

Residues 1–40 (MRGGGNMQQMMKQMQKMQKKMAQEQEKLKEERVAGTAGGG) are disordered. Positions 7-16 (MQQMMKQMQK) are enriched in low complexity. Over residues 21–33 (MAQEQEKLKEERV) the composition is skewed to basic and acidic residues.

The protein belongs to the YbaB/EbfC family. Homodimer.

Its subcellular location is the cytoplasm. The protein localises to the nucleoid. Binds to DNA and alters its conformation. May be involved in regulation of gene expression, nucleoid organization and DNA protection. The chain is Nucleoid-associated protein SE_2306 from Staphylococcus epidermidis (strain ATCC 12228 / FDA PCI 1200).